We begin with the raw amino-acid sequence, 272 residues long: Putative pyruvate, phosphate dikinase regulatory protein (272 aa).

Residue 151-158 coordinates ADP; sequence GISRTSKT.

This sequence belongs to the pyruvate, phosphate/water dikinase regulatory protein family. PDRP subfamily.

It carries out the reaction N(tele)-phospho-L-histidyl/L-threonyl-[pyruvate, phosphate dikinase] + ADP = N(tele)-phospho-L-histidyl/O-phospho-L-threonyl-[pyruvate, phosphate dikinase] + AMP + H(+). The enzyme catalyses N(tele)-phospho-L-histidyl/O-phospho-L-threonyl-[pyruvate, phosphate dikinase] + phosphate + H(+) = N(tele)-phospho-L-histidyl/L-threonyl-[pyruvate, phosphate dikinase] + diphosphate. Functionally, bifunctional serine/threonine kinase and phosphorylase involved in the regulation of the pyruvate, phosphate dikinase (PPDK) by catalyzing its phosphorylation/dephosphorylation. This chain is Putative pyruvate, phosphate dikinase regulatory protein, found in Staphylococcus aureus (strain USA300).